Consider the following 260-residue polypeptide: NAD-dependent protein deacetylase (260 aa).

The 252-residue stretch at 9 to 260 (DDIDGETLDA…QVLPAIVERL (252 aa)) folds into the Deacetylase sirtuin-type domain. NAD(+)-binding residues include Ala-35, Thr-39, Phe-46, Arg-47, Gln-114, Ile-116, Asp-117, and His-132. Residue Phe-46 participates in nicotinamide binding. Nicotinamide contacts are provided by Ile-116 and Asp-117. His-132 (proton acceptor) is an active-site residue. Zn(2+)-binding residues include Cys-140, Cys-143, Cys-166, and Cys-168. Ser-206, Ser-207, Asn-231, Asp-248, and Val-249 together coordinate NAD(+).

It belongs to the sirtuin family. Class U subfamily. The cofactor is Zn(2+).

It localises to the cytoplasm. The enzyme catalyses N(6)-acetyl-L-lysyl-[protein] + NAD(+) + H2O = 2''-O-acetyl-ADP-D-ribose + nicotinamide + L-lysyl-[protein]. Its function is as follows. NAD-dependent protein deacetylase which modulates the activities of several enzymes which are inactive in their acetylated form. Deacetylates the N-terminal lysine residue of Alba, the major archaeal chromatin protein and that, in turn, increases Alba's DNA binding affinity, thereby repressing transcription. The protein is NAD-dependent protein deacetylase of Haloarcula marismortui (strain ATCC 43049 / DSM 3752 / JCM 8966 / VKM B-1809) (Halobacterium marismortui).